The sequence spans 327 residues: GMP reductase (327 aa).

Residue Cys176 is the Thioimidate intermediate of the active site. 205-228 (IIADGGIRTHGDIAKSIRFGASMV) is an NADP(+) binding site.

It belongs to the IMPDH/GMPR family. GuaC type 2 subfamily.

The enzyme catalyses IMP + NH4(+) + NADP(+) = GMP + NADPH + 2 H(+). Functionally, catalyzes the irreversible NADPH-dependent deamination of GMP to IMP. It functions in the conversion of nucleobase, nucleoside and nucleotide derivatives of G to A nucleotides, and in maintaining the intracellular balance of A and G nucleotides. This chain is GMP reductase, found in Streptococcus agalactiae serotype V (strain ATCC BAA-611 / 2603 V/R).